The primary structure comprises 1143 residues: AP-3 complex subunit delta (1143 aa).

8 HEAT repeats span residues 129 to 166, 167 to 203, 205 to 242, 245 to 279, 280 to 317, 318 to 354, 356 to 389, and 416 to 455; these read DLAR…RYPE, SLRP…RNPK, YLPL…HEPR, KKLI…SDHI, PLMK…IHPK, AVSE…KKNI, DIVF…MGTY, and LIAS…PTEG. Disordered regions lie at residues 520–541, 634–692, 704–728, 741–792, and 829–899; these read KIPS…DQNE, QEPI…RHPI, KQAN…PENI, HVGA…NDAL, and KKNA…QAAA. Residues 524-540 show a composition bias toward acidic residues; the sequence is LDDDDEEEEAQEEEDQN. The stretch at 526–550 forms a coiled coil; it reads DDDEEEEAQEEEDQNEITHEIVQEC. Over residues 653–662 the composition is skewed to basic residues; sequence HQKKHHKHHR. Positions 666-675 are enriched in acidic residues; the sequence is DGDDDEDDET. Residues 814-835 adopt a coiled-coil conformation; the sequence is TDIIKEKEREMAMLAKKNAKLS. Positions 840-849 are enriched in polar residues; it reads PSTANYSEVT. Composition is skewed to low complexity over residues 854 to 867 and 881 to 899; these read APAK…AAGS and KPAA…QAAA. The GAE domain maps to 914–1016; that stretch reads KTILDDDNFK…FTLLASPSSS (103 aa).

Belongs to the adaptor complexes large subunit family. In terms of assembly, adaptor protein complex 3 (AP-3) is a heterotetramer composed of two large adaptins (delta-type subunit and beta-type subunit), a medium adaptin (mu-type subunit) and a small adaptin (sigma-type subunit).

Its subcellular location is the endosome membrane. In terms of biological role, part of the AP-3 complex, an adaptor-related complex which is essential for the compartmentalization of the endocytic pathway. This Dictyostelium discoideum (Social amoeba) protein is AP-3 complex subunit delta (ap3d1).